A 51-amino-acid chain; its full sequence is Large ribosomal subunit protein eL39-like (51 aa).

The protein belongs to the eukaryotic ribosomal protein eL39 family. In terms of assembly, component of a male germ cell-specific 60S large ribosomal subunit (LSU), which contains RPL10L and RPL39L, instead of RPL10 and RPL39 paralogs. The composition of the rest of the complex is similar to classical ribosomes. In terms of tissue distribution, highly expressed in spermatocytes and spermatids. Highly expressed in embryonic stem cells.

The protein resides in the cytoplasm. Functionally, male germ cell-specific component of the ribosome, which is required for the formation of sperm and male fertility. Replaces the RPL39 paralog in the ribosome of male germ cells. The ribosome is a large ribonucleoprotein complex responsible for the synthesis of proteins in the cell. The male germ cell-specific ribosome displays a ribosomal polypeptide exit tunnel of distinct size and charge states compared with the classical ribosome. It is responsible for regulating the biosynthesis and folding of a subset of male germ-cell-specific proteins that are essential for the formation of sperm. In Mus musculus (Mouse), this protein is Large ribosomal subunit protein eL39-like.